The sequence spans 61 residues: Large ribosomal subunit protein bL32 (61 aa).

This sequence belongs to the bacterial ribosomal protein bL32 family.

The polypeptide is Large ribosomal subunit protein bL32 (Acidithiobacillus ferrooxidans (strain ATCC 23270 / DSM 14882 / CIP 104768 / NCIMB 8455) (Ferrobacillus ferrooxidans (strain ATCC 23270))).